The sequence spans 578 residues: MIVSPCIAPRIPGTRLRKAMLAGVALVGLLSAGQLWAFNLDDVAAKAKDLAGQKYEAPKSNLPPVFRDMKYADYQKIRFLQEKAEWAKDKTPFKLSFYHQGMHFDTPVTINEITANKVEEIKYDPSRFEFGDVPHDADATKNLGYAGFRVLYPINKADKQDEIMTLLGASYFRVVGKGHRYGLSARGLAIDTALPSGEEFPRFREFWIEKPKPKDKHLVIYALLDSPRSTGAYKLTLRPGEDTLVDVKSRVYLRDNVSRLGIAPLTSMYLFGPNQPSKVMNYRPALHDSEGLSIHAGNGEWLWRPLNNPKHLAVSNFSVENPRGFGLLQRQRDFSDYEDLDDEYEKRPSTWIEPKGDWGKGTVDLVEIPTADETNDNIVAFWSPEKLPEVGKPFEYDYRLRWTIKEDQLHSPELGWVKQTLRSTGDVKQSNLIRQADGTVAFLVDFIGPNLATLPADTAVRSQVSVGDNAEVVENNLRYNPETKGWRLTLRLKVQDPKKATEMRAALLRDVPVEAPKPAKDSKQDKAAAKHAHAKAEKAKAEQPAEQPAADAASTNGTPATTEKVLTETWSYQLPADE.

Residues 1–37 (MIVSPCIAPRIPGTRLRKAMLAGVALVGLLSAGQLWA) form the signal peptide. Residues 511-578 (VPVEAPKPAK…TWSYQLPADE (68 aa)) form a disordered region. Basic and acidic residues predominate over residues 517–543 (KPAKDSKQDKAAAKHAHAKAEKAKAEQ). The span at 544–554 (PAEQPAADAAS) shows a compositional bias: low complexity.

It belongs to the OpgD/OpgG family.

Its subcellular location is the periplasm. It participates in glycan metabolism; osmoregulated periplasmic glucan (OPG) biosynthesis. Functionally, involved in the biosynthesis of osmoregulated periplasmic glucans (OPGs). This is Glucans biosynthesis protein G from Pseudomonas entomophila (strain L48).